A 234-amino-acid chain; its full sequence is Thymidine kinase, cytosolic (234 aa).

Serine 13 is subject to Phosphoserine. Residues 26–33, 58–60, and 97–100 each bind ATP; these read GPMFSGKS, DTR, and DEGQ. The active-site Proton acceptor is the glutamate 98. Residue phenylalanine 128 coordinates substrate. The Zn(2+) site is built by cysteine 153 and cysteine 156. Substrate contacts are provided by residues 172–176 and tyrosine 181; that span reads VEVIG. 2 residues coordinate Zn(2+): cysteine 185 and cysteine 188. A KEN box motif is present at residues 203–205; that stretch reads KEN.

This sequence belongs to the thymidine kinase family. As to quaternary structure, homotetramer. Tetramerization from dimerization is induced by ATP and increases catalytic efficiency due to a high affinity for thymidine. Tetramerization is inhibited by phosphorylation at Ser-13. Interacts (via the KEN box) with FZR1. Post-translationally, phosphorylated on Ser-13 in mitosis. Phosphorylation of Ser-13 by CDK1 during mitosis reduces homotetramerization and catalytic efficiency when DNA replication is complete and intracellular TK1 is still present at a high level. In terms of processing, polyubiquitinated. Postmitosis, ubiquitination leads to proteasomal degradation. The KEN box sequence located at the C-terminal region targets for degradation by the anaphase promoting complex (APC/C) activated and rate-limited by FZR1.

The protein localises to the cytoplasm. It catalyses the reaction thymidine + ATP = dTMP + ADP + H(+). Cell-cycle-regulated enzyme of importance in nucleotide metabolism. Catalyzes the first enzymatic step in the salvage pathway converting thymidine into thymidine monophosphate. Transcriptional regulation limits expression to the S phase of the cell cycle and transient expression coincides with the oscillation in the intracellular dTTP concentration. This is Thymidine kinase, cytosolic (TK1) from Cricetulus griseus (Chinese hamster).